A 481-amino-acid chain; its full sequence is Beta-amyrin 16-beta-monooxygenase (481 aa).

Residues 4–24 traverse the membrane as a helical segment; sequence LFIIISLVIVILTTIFILSNL. Residue Cys-428 participates in heme binding.

It belongs to the cytochrome P450 family. Requires heme as cofactor. In terms of tissue distribution, highly expressed in roots. Expressed at very low levels in leaves and petals.

It localises to the membrane. The catalysed reaction is beta-amyrin + reduced [NADPH--hemoprotein reductase] + O2 = maniladiol + oxidized [NADPH--hemoprotein reductase] + H2O + H(+). The enzyme catalyses oleanolate + reduced [NADPH--hemoprotein reductase] + O2 = cochalate + oxidized [NADPH--hemoprotein reductase] + H2O + H(+). Its function is as follows. Involved in triterpenoid saponin biosynthesis in roots. Catalyzes the hydroxylation of beta-amyrin at the C-16 beta position to form maniladiol. Is also able to oxidize oleanolat to cochalate. Has weak activity catalyzing the three-step oxidation at C-28 of beta-amyrin to form oleanolate. The chain is Beta-amyrin 16-beta-monooxygenase from Platycodon grandiflorus (Balloon flower).